The chain runs to 272 residues: Acetyl-coenzyme A carboxylase carboxyl transferase subunit alpha (272 aa).

In terms of domain architecture, CoA carboxyltransferase C-terminal spans 1 to 248 (MDKDFMKINV…KKTIVDSLLE (248 aa)).

This sequence belongs to the AccA family. As to quaternary structure, acetyl-CoA carboxylase is a heterohexamer composed of biotin carboxyl carrier protein (AccB), biotin carboxylase (AccC) and two subunits each of ACCase subunit alpha (AccA) and ACCase subunit beta (AccD).

It is found in the cytoplasm. The enzyme catalyses N(6)-carboxybiotinyl-L-lysyl-[protein] + acetyl-CoA = N(6)-biotinyl-L-lysyl-[protein] + malonyl-CoA. The protein operates within lipid metabolism; malonyl-CoA biosynthesis; malonyl-CoA from acetyl-CoA: step 1/1. In terms of biological role, component of the acetyl coenzyme A carboxylase (ACC) complex. First, biotin carboxylase catalyzes the carboxylation of biotin on its carrier protein (BCCP) and then the CO(2) group is transferred by the carboxyltransferase to acetyl-CoA to form malonyl-CoA. The protein is Acetyl-coenzyme A carboxylase carboxyl transferase subunit alpha of Clostridium beijerinckii (strain ATCC 51743 / NCIMB 8052) (Clostridium acetobutylicum).